A 268-amino-acid polypeptide reads, in one-letter code: Probable histidine-binding protein (268 aa).

The N-terminal stretch at 1–20 (MNMKKWIAAALACSALALSA) is a signal peptide. C21 carries N-palmitoyl cysteine lipidation. The S-diacylglycerol cysteine moiety is linked to residue C21.

The protein belongs to the bacterial solute-binding protein 3 family.

It is found in the cell membrane. Its function is as follows. Involved in histidine transport. In Neisseria gonorrhoeae, this protein is Probable histidine-binding protein (hisJ).